We begin with the raw amino-acid sequence, 324 residues long: Glyoxylate/hydroxypyruvate reductase B (324 aa).

Catalysis depends on residues Arg-237 and Glu-266. His-285 functions as the Proton donor in the catalytic mechanism.

It belongs to the D-isomer specific 2-hydroxyacid dehydrogenase family. GhrB subfamily. As to quaternary structure, homodimer.

It is found in the cytoplasm. The catalysed reaction is glycolate + NADP(+) = glyoxylate + NADPH + H(+). It carries out the reaction (R)-glycerate + NAD(+) = 3-hydroxypyruvate + NADH + H(+). The enzyme catalyses (R)-glycerate + NADP(+) = 3-hydroxypyruvate + NADPH + H(+). Its function is as follows. Catalyzes the NADPH-dependent reduction of glyoxylate and hydroxypyruvate into glycolate and glycerate, respectively. The polypeptide is Glyoxylate/hydroxypyruvate reductase B (Cronobacter sakazakii (strain ATCC BAA-894) (Enterobacter sakazakii)).